The sequence spans 801 residues: MESEQLFHRGYYRNSYNSITSASSDEELLDGAGVIMDFQTSEDDNLLDGDTAVGTHYTMTNGGSINSSTHLLDLLDEPIPGVGTYDDFHTIDWVREKCKDRERHRRINSKKKESAWEMTKSLYDAWSGWLVVTLTGLASGALAGLIDIAADWMTDLKEGICLSALWYNHEQCCWGSNETTFEERDKCPQWKTWAELIIGQAEGPGSYIMNYIMYIFWALSFAFLAVSLVKVFAPYACGSGIPEIKTILSGFIIRGYLGKWTLMIKTVTLVLAVASGLSLGKEGPLVHVACCCGNIFSYLFPKYSTNEAKKREVLSAASAAGVSVAFGAPIGGVLFSLEEVSYYFPLKTLWRSFFAALVAAFVLRSINPFGNSRLVLFYVEYHTPWYLFELFPFILLGVFGGLWGAFFIRANIAWCRRRKSTKFGKYPVLEVIIVAAITAVIAFPNPYTRLNTSELIKELFTDCGPLESSSLCDYRNDMNASKIVDDIPDRPAGIGVYSAIWQLCLALIFKIIMTVFTFGIKVPSGLFIPSMAYYHHDWFIFKEWCEVGADCITPGLYAMVGAAACLGGVTRMTVSLVVIVFELTGGLEYIVPLMAAVMTSKWVGDAFGREGIYEAHIRLNGYPFLDAKEEFTHTTLAADVMRPRRNDPPLAVLTQDNMTVDDIENMINETSYNGFPVIMSKESQRLVGFALRRDLTIAIESARKKQEGIVGSSRVCFAQHTPSLPAESPRPLKLRSILDMSPFTVTDHTPMEIVVDIFRKLGLRQCLVTHNGRLLGIITKKDILRHMAQTANQDPASIMFN.

Over 1 to 125 the chain is Cytoplasmic; that stretch reads MESEQLFHRG…WEMTKSLYDA (125 aa). 3 short sequence motifs (di-leucine internalization motif; mediates targeting to late endosome and lysosome membranes) span residues 28–29, 46–47, and 71–75; these read LL and LLDLL. The chain crosses the membrane as a helical span at residues 126–163; sequence WSGWLVVTLTGLASGALAGLIDIAADWMTDLKEGICLS. A glycan (N-linked (GlcNAc...) asparagine) is linked at N177. A helical membrane pass occupies residues 209-232; that stretch reads MNYIMYIFWALSFAFLAVSLVKVF. The Selectivity filter part_1 motif lies at 238-242; sequence GSGIP. Position 239 (S239) interacts with chloride. Residues 241–248 constitute an intramembrane region (helical); it reads IPEIKTIL. 2 consecutive transmembrane segments (helical) span residues 258–276 and 282–301; these read GKWT…VASG and EGPL…YLFP. The Selectivity filter part_2 signature appears at 280 to 284; the sequence is GKEGP. 2 intramembrane regions (helical) span residues 313–325 and 329–337; these read VLSA…VSVA and PIGGVLFSL. The next 3 helical transmembrane spans lie at 349–367, 391–416, and 423–443; these read LWRS…RSIN, FPFI…AWCR, and FGKY…VIAF. 2 N-linked (GlcNAc...) asparagine glycosylation sites follow: N451 and N479. A helical transmembrane segment spans residues 500 to 520; the sequence is IWQLCLALIFKIIMTVFTFGI. A Selectivity filter part_3 motif is present at residues 525–529; sequence GLFIP. Residue F527 participates in chloride binding. 2 consecutive intramembrane regions (helical) follow at residues 555-569 and 573-584; these read GLYA…LGGV and TVSLVVIVFELT. The segment at residues 585 to 588 is an intramembrane region (note=Loop between two helices); sequence GGLE. The chain crosses the membrane as a helical span at residues 589-607; that stretch reads YIVPLMAAVMTSKWVGDAF. Residues 608 to 801 lie on the Cytoplasmic side of the membrane; the sequence is GREGIYEAHI…NQDPASIMFN (194 aa). Residue Y613 participates in chloride binding. 2 CBS domains span residues 641 to 705 and 738 to 795; these read MRPR…ARKK and LDMS…NQDP. ATP-binding positions include 672–674 and 779–782; these read YNG and TKKD.

It belongs to the chloride channel (TC 2.A.49) family. ClC-3/CLCN3 subfamily. Monomer and homodimer. Forms heterodimers with CLCN4. In terms of processing, N-glycosylated.

The protein localises to the early endosome membrane. It is found in the late endosome membrane. The protein resides in the lysosome membrane. Its subcellular location is the cell membrane. Its function is as follows. Strongly outwardly rectifying, electrogenic H(+)/Cl(-)exchanger which mediates the exchange of chloride ions against protons. The CLC channel family contains both chloride channels and proton-coupled anion transporters that exchange chloride or another anion for protons. The presence of conserved gating glutamate residues is typical for family members that function as antiporters. The protein is H(+)/Cl(-) exchange transporter 3 (CLCN3) of Pongo abelii (Sumatran orangutan).